Here is a 510-residue protein sequence, read N- to C-terminus: Bifunctional pantoate ligase/cytidylate kinase (510 aa).

A pantoate--beta-alanine ligase region spans residues 1–276 (MNKIIIRKTE…CGKTRLIDHV (276 aa)). 29-36 (MGNLHDGH) is a binding site for ATP. H36 acts as the Proton donor in catalysis. Residue Q61 participates in (R)-pantoate binding. Q61 serves as a coordination point for beta-alanine. 150 to 153 (GEKD) contacts ATP. A (R)-pantoate-binding site is contributed by Q156. An ATP-binding site is contributed by 187–190 (FSSR). Residues 277–510 (FLMKRKPIIA…LNIPKEIQLE (234 aa)) are cytidylate kinase.

This sequence in the N-terminal section; belongs to the pantothenate synthetase family. It in the C-terminal section; belongs to the cytidylate kinase family. Type 1 subfamily.

It is found in the cytoplasm. It catalyses the reaction (R)-pantoate + beta-alanine + ATP = (R)-pantothenate + AMP + diphosphate + H(+). The catalysed reaction is CMP + ATP = CDP + ADP. It carries out the reaction dCMP + ATP = dCDP + ADP. It participates in cofactor biosynthesis; (R)-pantothenate biosynthesis; (R)-pantothenate from (R)-pantoate and beta-alanine: step 1/1. Catalyzes the condensation of pantoate with beta-alanine in an ATP-dependent reaction via a pantoyl-adenylate intermediate. Functionally, catalyzes the transfer of a phosphate group from ATP to either CMP or dCMP to form CDP or dCDP and ADP, respectively. This chain is Bifunctional pantoate ligase/cytidylate kinase, found in Prochlorococcus marinus subsp. pastoris (strain CCMP1986 / NIES-2087 / MED4).